The sequence spans 249 residues: 1-(5-phosphoribosyl)-5-[(5-phosphoribosylamino)methylideneamino] imidazole-4-carboxamide isomerase (249 aa).

Residue Asp-8 is the Proton acceptor of the active site. Asp-130 serves as the catalytic Proton donor.

The protein belongs to the HisA/HisF family.

It is found in the cytoplasm. The catalysed reaction is 1-(5-phospho-beta-D-ribosyl)-5-[(5-phospho-beta-D-ribosylamino)methylideneamino]imidazole-4-carboxamide = 5-[(5-phospho-1-deoxy-D-ribulos-1-ylimino)methylamino]-1-(5-phospho-beta-D-ribosyl)imidazole-4-carboxamide. Its pathway is amino-acid biosynthesis; L-histidine biosynthesis; L-histidine from 5-phospho-alpha-D-ribose 1-diphosphate: step 4/9. This is 1-(5-phosphoribosyl)-5-[(5-phosphoribosylamino)methylideneamino] imidazole-4-carboxamide isomerase from Chromohalobacter salexigens (strain ATCC BAA-138 / DSM 3043 / CIP 106854 / NCIMB 13768 / 1H11).